The chain runs to 330 residues: Low affinity immunoglobulin gamma Fc region receptor II (330 aa).

The signal sequence occupies residues 1 to 29 (MESNWTVHVFSRTLCHMLLWTAVLNLAAG). The Extracellular segment spans residues 30–210 (THDLPKAVVK…QGPKSSRSLP (181 aa)). 2 Ig-like C2-type domains span residues 50–106 (EDTV…QTRL) and 131–189 (GETI…LGRT). 2 cysteine pairs are disulfide-bonded: C57–C99 and C138–C182. N65, N92, N166, and N173 each carry an N-linked (GlcNAc...) asparagine glycan. A helical transmembrane segment spans residues 211-231 (VLTIVAAVTGIAVAAIVIILV). The Cytoplasmic segment spans residues 232 to 330 (SLVYLKKKQV…ETEHDYQNHI (99 aa)). The disordered stretch occupies residues 261 to 330 (VGEYRQPSGG…ETEHDYQNHI (70 aa)). Y290 bears the Phosphotyrosine mark. The ITIM motif signature appears at 307 to 312 (ITYSLL). A Phosphotyrosine; by SRC-type Tyr-kinases modification is found at Y309. Y326 is subject to Phosphotyrosine.

As to quaternary structure, interacts with FGR. Interacts with LYN. In terms of processing, glycosylated. Post-translationally, when coaggregated to BCR, isoform IIB1 and isoform IIB1' become tyrosine phosphorylated and bind to the SH2 domains of the protein tyrosine phosphatase PTPC1. Phosphorylated by SRC-type Tyr-kinases such as LYN, BLK, FYN and SYK. As to expression, widely expressed by cells of hemopoietic origin. The isoforms are differentially expressed. Isoform IIB1 is preferentially expressed by cells of the lymphoid lineage, isoform IIB2 by cells of the myeloid lineage, and isoform IIB3 is released by macrophages and is present in the serum. Isoform IIB1' is expressed in myeloid and lymphoid cell lines, in normal spleen cells, and in resting or LPS-activated B-cells but is not detected in mesenteric lymph node cells.

The protein resides in the cell membrane. It localises to the cytoplasm. The protein localises to the cytoskeleton. It is found in the secreted. Its function is as follows. Receptor for the Fc region of complexed immunoglobulins gamma. Low affinity receptor. Involved in a variety of effector and regulatory functions such as phagocytosis of antigen-antibody complexes from the circulation and modulation of antibody production by B-cells. Isoform IIB1 and isoform IIB1' form caps but fail to mediate endocytosis or phagocytosis. Isoform IIB2 can mediate the endocytosis of soluble immune complexes via clathrin-coated pits. Isoform IIB1 and isoform IIB2 can down-regulate B-cell, T-cell, and mast cell activation when coaggregated to B-cell receptors for AG (BCR), T-cell receptors for AG (TCR), and Fc receptors, respectively. The protein is Low affinity immunoglobulin gamma Fc region receptor II (Fcgr2) of Mus musculus (Mouse).